The primary structure comprises 209 residues: GTP-binding nuclear protein Ran1A (209 aa).

The 162-residue stretch at 1–162 folds into the Small GTPase Ran-type domain; the sequence is NFKLVIVGDG…LYLARKLAGD (162 aa). 9 to 16 lines the GTP pocket; the sequence is DGGTGKTT. A switch-I region spans residues 28 to 36; the sequence is KKYEPTIGV. GTP contacts are provided by residues Gly-59, 113 to 116, and 141 to 143; these read NKVD and SAK. Residues 59–75 form a switch-II region; that stretch reads GQEKFGGLRDGYYIHGQ. Over residues 187–196 the composition is skewed to low complexity; it reads QHEAELAQAA. A disordered region spans residues 187-209; it reads QHEAELAQAASQPLPDDDDDAFD.

The protein belongs to the small GTPase superfamily. Ran family. In terms of assembly, found in a nuclear export complex with RanGTP, exportin and pre-miRNA.

It is found in the nucleus. Functionally, GTP-binding protein involved in nucleocytoplasmic transport. Required for the import of protein into the nucleus and also for RNA export. Involved in chromatin condensation and control of cell cycle. The chain is GTP-binding nuclear protein Ran1A (RAN1A) from Lotus japonicus (Lotus corniculatus var. japonicus).